A 696-amino-acid chain; its full sequence is Polyribonucleotide nucleotidyltransferase (696 aa).

The Mg(2+) site is built by Asp-483 and Asp-489. In terms of domain architecture, KH spans 550-609 (PRITTIWVKVDKIRDVIGSGGKNIRSVTEATGVSIDIDDTGKINIASTNKEACDLAIKMI). The 69-residue stretch at 619–687 (GKLYMGTVKK…KQGKIKLSRK (69 aa)) folds into the S1 motif domain.

Belongs to the polyribonucleotide nucleotidyltransferase family. The cofactor is Mg(2+).

The protein localises to the cytoplasm. The enzyme catalyses RNA(n+1) + phosphate = RNA(n) + a ribonucleoside 5'-diphosphate. Functionally, involved in mRNA degradation. Catalyzes the phosphorolysis of single-stranded polyribonucleotides processively in the 3'- to 5'-direction. The protein is Polyribonucleotide nucleotidyltransferase of Citrifermentans bemidjiense (strain ATCC BAA-1014 / DSM 16622 / JCM 12645 / Bem) (Geobacter bemidjiensis).